The following is a 125-amino-acid chain: Small ribosomal subunit protein uS13 (125 aa).

The protein belongs to the universal ribosomal protein uS13 family. In terms of assembly, part of the 30S ribosomal subunit. Forms a loose heterodimer with protein S19. Forms two bridges to the 50S subunit in the 70S ribosome.

Its function is as follows. Located at the top of the head of the 30S subunit, it contacts several helices of the 16S rRNA. In the 70S ribosome it contacts the 23S rRNA (bridge B1a) and protein L5 of the 50S subunit (bridge B1b), connecting the 2 subunits; these bridges are implicated in subunit movement. Contacts the tRNAs in the A and P-sites. The chain is Small ribosomal subunit protein uS13 from Rickettsia akari (strain Hartford).